Consider the following 688-residue polypeptide: Phosphatidylinositol 4-phosphate 5-kinase type-1 gamma (688 aa).

A disordered region spans residues 48-71 (GQPGPGHGKKLGHRGVDASGETTY). In terms of domain architecture, PIPK spans 75–443 (TSSTLKGAIQ…RFFKFMSSTV (369 aa)). 2 positions are modified to N6-acetyllysine: K265 and K268. R459 carries the post-translational modification Asymmetric dimethylarginine; alternate. The residue at position 459 (R459) is an Omega-N-methylarginine; alternate. Residues 525-534 (TTLSSTSLSI) are compositionally biased toward low complexity. Disordered regions lie at residues 525–565 (TTLS…QEEL) and 592–629 (GAGVEVPPSGASAAATVEVDAASQASEPASQASDEEDA). S554 bears the Phosphoserine mark. The segment covering 602–623 (ASAAATVEVDAASQASEPASQA) has biased composition (low complexity). Y635 is modified (phosphotyrosine; by EGFR). Y671 bears the Phosphotyrosine; by CSK mark. The residue at position 672 (S672) is a Phosphoserine; by CDK5, MAPK1 and CDK1. Phosphoserine occurs at positions 682 and 686. T688 is modified (phosphothreonine).

As to quaternary structure, interacts with TLN1. Interacts with TLN2; interaction stimulates 1-phosphatidylinositol-4-phosphate 5-kinase activity. May compete with beta-integrins for the same binding site on TLN1 and TLN2. Interacts with ARF6; interaction stimulates 1-phosphatidylinositol-4-phosphate 5-kinase activity. Interacts with AP2B1. Interacts with AP2M1; phosphorylation of PIP5K1C by CSK disrupts the interaction; clathrin competes with PIP5K1C. Interacts with CDH1. Interacts with CSK. Interacts with PLCG1; interaction is abolished upon EGF stimulation. Interacts with LAPTM4B; promotes SNX5 association with LAPTM4B; kinase activity of PIP5K1C is required; interaction is regulated by phosphatidylinositol 4,5-bisphosphate generated by PIP5K1C. Post-translationally, phosphorylation on Ser-672 negatively regulates binding to TLN2 and is strongly stimulated in mitosis. Phosphorylation on Tyr-671 is necessary for targeting to focal adhesions. Phosphorylation on Ser-672 and Tyr-671 are mutually exclusive. Phosphorylated by SYK and CSK. Tyrosine phosphorylation is enhanced by PTK2 signaling. Phosphorylated at Tyr-635 upon EGF stimulation. Some studies suggest that phosphorylation on Tyr-671 enhances binding to tailins (TLN1 and TLN2); others that phosphorylation at Tyr-671 does not directly enhance binding to tailins (TLN1 and TLN2) but may act indirectly by inhibiting phosphorylation at Ser-672. In terms of processing, acetylation at Lys-265 and Lys-268 seems to decrease lipid kinase activity. Deacetylation of these sites by SIRT1 positively regulates the exocytosis of TSH-containing granules from pituitary cells.

It localises to the cell membrane. Its subcellular location is the endomembrane system. The protein localises to the cytoplasm. It is found in the cell junction. The protein resides in the focal adhesion. It localises to the adherens junction. Its subcellular location is the cell projection. The protein localises to the ruffle membrane. It is found in the phagocytic cup. The protein resides in the uropodium. It catalyses the reaction a 1,2-diacyl-sn-glycero-3-phospho-(1D-myo-inositol 4-phosphate) + ATP = a 1,2-diacyl-sn-glycero-3-phospho-(1D-myo-inositol-4,5-bisphosphate) + ADP + H(+). The catalysed reaction is 1-octadecanoyl-2-(5Z,8Z,11Z,14Z)-eicosatetraenoyl-sn-glycero-3-phospho-1D-myo-inositol 4-phosphate + ATP = 1-octadecanoyl-2-(5Z,8Z,11Z,14Z)-eicosatetraenoyl-sn-glycero-3-phospho-1D-myo-inositol 4,5-bisphosphate + ADP + H(+). It carries out the reaction 1-octadecanoyl-2-(9Z)-octadecenoyl-sn-glycero-3-phospho-1D-myo-inositol 4-phosphate + ATP = 1-octadecanoyl-2-(9Z)-octadecenoyl-sn-glycero-3-phospho-1D-myo-inositol 4,5-bisphosphate + ADP + H(+). The enzyme catalyses 1-octadecanoyl-2-(9Z)-octadecenoyl-sn-glycero-3-phospho-1D-myo-inositol + ATP = 1-octadecanoyl-2-(9Z)-octadecenoyl-sn-glycero-3-phospho-1D-myo-inositol 5-phosphate + ADP + H(+). It catalyses the reaction 1-octadecanoyl-2-(9Z,12Z)-octadecadienoyl-sn-glycero-3-phospho-1D-myo-inositol + ATP = 1-octadecanoyl-2-(9Z,12Z)-octadecadienoyl-sn-glycero-3-phospho-1D-myo-inositol 5-phosphate + ADP + H(+). The catalysed reaction is 1-octadecanoyl-2-(5Z,8Z,11Z,14Z-eicosatetraenoyl)-sn-glycero-3-phospho-(1D-myo-inositol) + ATP = 1-octadecanoyl-2-(5Z,8Z,11Z,14Z)-eicosatetraenoyl-sn-glycero-3-phospho-1D-myo-inositol 5-phosphate + ADP + H(+). It carries out the reaction 1,2-di-(9Z,12Z)-octadecadienoyl-sn-glycero-3-phospho-1D-myo-inositol + ATP = 1,2-di(9Z,12Z)-octadecadienoyl-sn-glycero-3-phospho-1D-myo-inositol 5-phosphate + ADP + H(+). In terms of biological role, catalyzes the phosphorylation of phosphatidylinositol 4-phosphate (PtdIns(4)P/PI4P) to form phosphatidylinositol 4,5-bisphosphate (PtdIns(4,5)P2/PIP2), a lipid second messenger that regulates several cellular processes such as signal transduction, vesicle trafficking, actin cytoskeleton dynamics, cell adhesion, and cell motility. PtdIns(4,5)P2 can directly act as a second messenger or can be utilized as a precursor to generate other second messengers: inositol 1,4,5-trisphosphate (IP3), diacylglycerol (DAG) or phosphatidylinositol-3,4,5-trisphosphate (PtdIns(3,4,5)P3/PIP3). PIP5K1A-mediated phosphorylation of PtdIns(4)P is the predominant pathway for PtdIns(4,5)P2 synthesis. Together with PIP5K1A, is required for phagocytosis, both enzymes regulating different types of actin remodeling at sequential steps. Promotes particle attachment by generating the pool of PtdIns(4,5)P2 that induces controlled actin depolymerization to facilitate Fc-gamma-R clustering. Mediates RAC1-dependent reorganization of actin filaments. Required for synaptic vesicle transport. Controls the plasma membrane pool of PtdIns(4,5)P2 implicated in synaptic vesicle endocytosis and exocytosis. Plays a role in endocytosis mediated by clathrin and AP-2 (adaptor protein complex 2). Required for clathrin-coated pits assembly at the synapse. Participates in cell junction assembly. Modulates adherens junctions formation by facilitating CDH1/cadherin trafficking. Required for focal adhesion dynamics. Modulates the targeting of talins (TLN1 and TLN2) to the plasma membrane and their efficient assembly into focal adhesions. Regulates the interaction between talins (TLN1 and TLN2) and beta-integrins. Required for uropodium formation and retraction of the cell rear during directed migration. Has a role in growth factor-stimulated directional cell migration and adhesion. Required for talin assembly into nascent adhesions forming at the leading edge toward the direction of the growth factor. Negative regulator of T-cell activation and adhesion. Negatively regulates integrin alpha-L/beta-2 (LFA-1) polarization and adhesion induced by T-cell receptor. Together with PIP5K1A has a role during embryogenesis and together with PIP5K1B may have a role immediately after birth. The protein is Phosphatidylinositol 4-phosphate 5-kinase type-1 gamma of Rattus norvegicus (Rat).